Here is a 114-residue protein sequence, read N- to C-terminus: MHTYTRACCMGGWYGRETRKRNSHKKVTKRAVEKRKQDSTRQKRRTGAWRPFHDCCCHLGSSVFSRPRAAKSPPFSPSVRAPTDQPADSPAGASGERRGSSDLGKLLNPCVFIW.

Residues 18-29 show a composition bias toward basic residues; sequence TRKRNSHKKVTK. 2 disordered regions span residues 18 to 47 and 65 to 108; these read TRKRNSHKKVTKRAVEKRKQDSTRQKRRTG and SRPR…KLLN. Basic and acidic residues predominate over residues 30–41; that stretch reads RAVEKRKQDSTR.

This is an uncharacterized protein from Homo sapiens (Human).